Here is a 386-residue protein sequence, read N- to C-terminus: Phosphoglycerate kinase (386 aa).

Substrate contacts are provided by residues 21–23, Arg36, 59–62, Arg113, and Arg146; these read DLN and HLGR. ATP is bound by residues Lys197, Glu314, and 340-343; that span reads GGDT.

It belongs to the phosphoglycerate kinase family. In terms of assembly, monomer.

It localises to the cytoplasm. The catalysed reaction is (2R)-3-phosphoglycerate + ATP = (2R)-3-phospho-glyceroyl phosphate + ADP. It participates in carbohydrate degradation; glycolysis; pyruvate from D-glyceraldehyde 3-phosphate: step 2/5. The protein is Phosphoglycerate kinase of Vibrio campbellii (strain ATCC BAA-1116).